A 441-amino-acid chain; its full sequence is Amino-acid acetyltransferase (441 aa).

The 140-residue stretch at 295-434 folds into the N-acetyltransferase domain; it reads EQVRRATIND…QELYNYQRRS (140 aa).

Belongs to the acetyltransferase family. ArgA subfamily. As to quaternary structure, homohexamer.

The protein resides in the cytoplasm. The catalysed reaction is L-glutamate + acetyl-CoA = N-acetyl-L-glutamate + CoA + H(+). Its pathway is amino-acid biosynthesis; L-arginine biosynthesis; N(2)-acetyl-L-ornithine from L-glutamate: step 1/4. The protein is Amino-acid acetyltransferase of Yersinia pseudotuberculosis serotype O:1b (strain IP 31758).